A 506-amino-acid chain; its full sequence is AMP phosphorylase (506 aa).

AMP contacts are provided by residues Gly-168, 194-199 (SRAITG), and Thr-203. The active-site Proton donor is Asp-256. AMP contacts are provided by Ser-264 and Lys-288.

It belongs to the thymidine/pyrimidine-nucleoside phosphorylase family. Type 2 subfamily.

It catalyses the reaction AMP + phosphate = alpha-D-ribose 1,5-bisphosphate + adenine. The catalysed reaction is CMP + phosphate = cytosine + alpha-D-ribose 1,5-bisphosphate. The enzyme catalyses UMP + phosphate = alpha-D-ribose 1,5-bisphosphate + uracil. Catalyzes the conversion of AMP and phosphate to adenine and ribose 1,5-bisphosphate (R15P). Exhibits phosphorylase activity toward CMP and UMP in addition to AMP. Functions in an archaeal AMP degradation pathway, together with R15P isomerase and RubisCO. This is AMP phosphorylase from Methanococcoides burtonii (strain DSM 6242 / NBRC 107633 / OCM 468 / ACE-M).